A 61-amino-acid polypeptide reads, in one-letter code: Small ribosomal subunit protein uS14 (61 aa).

Residues Cys-24, Cys-27, Cys-40, and Cys-43 each coordinate Zn(2+).

Belongs to the universal ribosomal protein uS14 family. Zinc-binding uS14 subfamily. Part of the 30S ribosomal subunit. Contacts proteins S3 and S10. Zn(2+) serves as cofactor.

In terms of biological role, binds 16S rRNA, required for the assembly of 30S particles and may also be responsible for determining the conformation of the 16S rRNA at the A site. This Thermus thermophilus (strain ATCC BAA-163 / DSM 7039 / HB27) protein is Small ribosomal subunit protein uS14.